A 332-amino-acid polypeptide reads, in one-letter code: Formamidase (332 aa).

A CN hydrolase domain is found at phenylalanine 14–proline 259. The active-site Proton acceptor is glutamate 60. Lysine 132 (proton donor) is an active-site residue. The active-site Nucleophile is the cysteine 165.

Belongs to the carbon-nitrogen hydrolase superfamily. Aliphatic amidase family.

It catalyses the reaction formamide + H2O = formate + NH4(+). Functionally, is an aliphatic amidase with a restricted substrate specificity, as it only hydrolyzes formamide. The polypeptide is Formamidase (Bacillus thuringiensis (strain Al Hakam)).